A 129-amino-acid chain; its full sequence is Histone H2A.J (129 aa).

A disordered region spans residues 1 to 22 (MSGRGKQGGKVRAKAKSRSSRA). N6-acetyllysine occurs at positions 6 and 10. Over residues 7 to 19 (QGGKVRAKAKSRS) the composition is skewed to basic residues. Lysine 10 carries the N6-lactoyllysine; alternate modification. Glutamine 105 carries the post-translational modification N5-methylglutamine. Threonine 121 is subject to Phosphothreonine; by DCAF1.

It belongs to the histone H2A family. As to quaternary structure, the nucleosome is a histone octamer containing two molecules each of H2A, H2B, H3 and H4 assembled in one H3-H4 heterotetramer and two H2A-H2B heterodimers. The octamer wraps approximately 147 bp of DNA. Post-translationally, monoubiquitination of Lys-120 (H2AXK119ub) gives a specific tag for epigenetic transcriptional repression. Following DNA double-strand breaks (DSBs), it is ubiquitinated through 'Lys-63' linkage of ubiquitin moieties. In terms of processing, glutamine methylation at Gln-105 (H2AQ104me) by FBL is specifically dedicated to polymerase I. It is present at 35S ribosomal DNA locus and impairs binding of the FACT complex. Phosphorylation on Ser-2 (H2AS1ph) is enhanced during mitosis. Phosphorylation on Ser-2 by RPS6KA5/MSK1 directly represses transcription. Acetylation of H3 inhibits Ser-2 phosphorylation by RPS6KA5/MSK1. Phosphorylation at Thr-121 (H2AT120ph) by DCAF1 is present in the regulatory region of many tumor suppresor genes and down-regulates their transcription.

Its subcellular location is the nucleus. It localises to the chromosome. Functionally, core component of nucleosome. Nucleosomes wrap and compact DNA into chromatin, limiting DNA accessibility to the cellular machineries which require DNA as a template. Histones thereby play a central role in transcription regulation, DNA repair, DNA replication and chromosomal stability. DNA accessibility is regulated via a complex set of post-translational modifications of histones, also called histone code, and nucleosome remodeling. The polypeptide is Histone H2A.J (Mus musculus (Mouse)).